The primary structure comprises 358 residues: Cinnamyl alcohol dehydrogenase 1 (358 aa).

Residues glycine 21–valine 349 form the Enoyl reductase (ER) domain. Residue cysteine 48 participates in Zn(2+) binding. Residue serine 50 participates in NADP(+) binding. Residues histidine 70, glutamate 71, cysteine 101, cysteine 104, cysteine 107, cysteine 115, and cysteine 164 each contribute to the Zn(2+) site. Residues threonine 168, glycine 189–glycine 194, serine 212–lysine 217, threonine 252, glycine 276, and serine 299–valine 301 each bind NADP(+).

It belongs to the zinc-containing alcohol dehydrogenase family. Homodimer. Requires Zn(2+) as cofactor.

The enzyme catalyses (E)-cinnamyl alcohol + NADP(+) = (E)-cinnamaldehyde + NADPH + H(+). It carries out the reaction (E)-coniferol + NADP(+) = (E)-coniferaldehyde + NADPH + H(+). The catalysed reaction is (E)-sinapyl alcohol + NADP(+) = (E)-sinapaldehyde + NADPH + H(+). It catalyses the reaction (E)-4-coumaroyl alcohol + NADP(+) = (E)-4-coumaraldehyde + NADPH + H(+). It functions in the pathway aromatic compound metabolism; phenylpropanoid biosynthesis. Involved in lignin biosynthesis. Catalyzes the final step specific for the production of lignin monomers. Catalyzes the NADPH-dependent reduction of coniferaldehyde, 5-hydroxyconiferaldehyde, sinapaldehyde, 4-coumaraldehyde and caffeyl aldehyde to their respective alcohols. Can use coumaraldehyde and, with a lower efficiency, coniferaldehyde and sinapaldehyde as substrates. The polypeptide is Cinnamyl alcohol dehydrogenase 1 (Medicago truncatula (Barrel medic)).